Consider the following 446-residue polypeptide: Phosphoglucosamine mutase (446 aa).

Serine 102 (phosphoserine intermediate) is an active-site residue. Mg(2+)-binding residues include serine 102, aspartate 241, aspartate 243, and aspartate 245. The residue at position 102 (serine 102) is a Phosphoserine.

It belongs to the phosphohexose mutase family. It depends on Mg(2+) as a cofactor. Activated by phosphorylation.

It carries out the reaction alpha-D-glucosamine 1-phosphate = D-glucosamine 6-phosphate. Catalyzes the conversion of glucosamine-6-phosphate to glucosamine-1-phosphate. The protein is Phosphoglucosamine mutase of Yersinia pseudotuberculosis serotype O:1b (strain IP 31758).